The sequence spans 1766 residues: DNA-directed RNA polymerase II subunit RPB1-B (1766 aa).

Residues Cys-69, Cys-72, Cys-79, and His-82 each coordinate Zn(2+). Mg(2+) is bound by residues Asp-487, Asp-489, and Asp-491. The interval 813–825 (PHEFFFHTMAGRE) is bridging helix. The interval 1660–1766 (HAMSSAAPPS…EFGDEEEEEQ (107 aa)) is disordered. Positions 1706–1716 (RGDEPSTHRSD) are enriched in basic and acidic residues. Low complexity predominate over residues 1742–1756 (PTAKTPQQAAPPTAA).

This sequence belongs to the RNA polymerase beta' chain family. In terms of assembly, component of the RNA polymerase II (Pol II) complex consisting of 12 subunits.

The protein localises to the nucleus. It carries out the reaction RNA(n) + a ribonucleoside 5'-triphosphate = RNA(n+1) + diphosphate. Its function is as follows. DNA-dependent RNA polymerase catalyzes the transcription of DNA into RNA using the four ribonucleoside triphosphates as substrates. Largest and catalytic component of RNA polymerase II which synthesizes mRNA precursors and many functional non-coding RNAs. Forms the polymerase active center together with the second largest subunit. Pol II is the central component of the basal RNA polymerase II transcription machinery. It is composed of mobile elements that move relative to each other. RPB1 is part of the core element with the central large cleft, the clamp element that moves to open and close the cleft and the jaws that are thought to grab the incoming DNA template. At the start of transcription, a single-stranded DNA template strand of the promoter is positioned within the central active site cleft of Pol II. A bridging helix emanates from RPB1 and crosses the cleft near the catalytic site and is thought to promote translocation of Pol II by acting as a ratchet that moves the RNA-DNA hybrid through the active site by switching from straight to bent conformations at each step of nucleotide addition. During transcription elongation, Pol II moves on the template as the transcript elongates. The sequence is that of DNA-directed RNA polymerase II subunit RPB1-B (TRP5.9) from Trypanosoma brucei brucei.